A 542-amino-acid polypeptide reads, in one-letter code: Formate--tetrahydrofolate ligase (542 aa).

53–60 (TPAGEGKT) is an ATP binding site.

This sequence belongs to the formate--tetrahydrofolate ligase family.

It catalyses the reaction (6S)-5,6,7,8-tetrahydrofolate + formate + ATP = (6R)-10-formyltetrahydrofolate + ADP + phosphate. It participates in one-carbon metabolism; tetrahydrofolate interconversion. The sequence is that of Formate--tetrahydrofolate ligase from Thermotoga petrophila (strain ATCC BAA-488 / DSM 13995 / JCM 10881 / RKU-1).